A 401-amino-acid chain; its full sequence is Putative hetero-Diels-Alderase asR5 (401 aa).

An N-terminal signal peptide occupies residues 1–21 (MRRSFLISAALGLSMSTPALA). Residues Asn71, Asn77, Asn240, and Asn334 are each glycosylated (N-linked (GlcNAc...) asparagine).

Belongs to the eupF Diels-Alderase family.

The protein operates within secondary metabolite biosynthesis; terpenoid biosynthesis. In terms of biological role, putative hetero-Diels-Alderase; part of the gene cluster that mediates the biosynthesis of xenovulene A, an unusual meroterpenoid that has potent inhibitory effects on the human gamma-aminobutyrate A (GABAA) benzodiazepine receptor. The first step of xenovulene A biosynthesis is the biosynthesis of 3-methylorcinaldehyde performed by the non-reducing polyketide synthase aspks1. The salicylate hydroxylase asL1 then catalyzes the oxidative dearomatization of 3-methylorcinaldehyde to yield a dearomatized hydroxycyclohexadione. The 2-oxoglutarate-dependent dioxygenase asL3 further catalyzes the oxidative ring expansion to provide the first tropolone metabolite. The cytochrome P450 monooxygenase asR2 allows the synthesis of tropolone hemiacetal. In parallel, a previously unrecognised class of terpene cyclase, asR6, produces alpha-humulene from farnesylpyrophosphate (FPP). The putative Diels-Alderase asR5 probably catalyzes the formation of the tropolone-humulene skeleton by linking humulene and the polyketide moiety. Oxidative-ring contractions catalyzed by asL4 and asL6 then processively remove carbon atoms from the polyketide to yield xenovulene A. This Sarocladium schorii (Acremonium strictum (strain IMI 501407)) protein is Putative hetero-Diels-Alderase asR5.